The chain runs to 129 residues: uncharacterized protein (129 aa).

Positions 34–57 (SAPLRPPRELHAAPPPATPTQTVV) are disordered.

This is an uncharacterized protein from Homo sapiens (Human).